Here is an 827-residue protein sequence, read N- to C-terminus: Periplasmic nitrate reductase (827 aa).

Positions 1–34 (MSLTRRDFIKANAVPATAAAAGLATPAIAQPAKA) form a signal peptide, tat-type signal. The 57-residue stretch at 36–92 (IRWDKGVCRFCGTGCSVLVGVQDGRVVATQGDPDSPVNRGLNCIKGYFLSKIMYGED) folds into the 4Fe-4S Mo/W bis-MGD-type domain. Residues Cys43, Cys46, Cys50, and Cys78 each coordinate [4Fe-4S] cluster. Mo-bis(molybdopterin guanine dinucleotide)-binding positions include Lys80, Gln148, Asn173, Cys177, 210–217 (WGSNMAEM), 241–245 (STFEH), 260–262 (QTD), Met371, Gln375, Asn481, 507–508 (SD), Lys530, Asp557, and 717–726 (TGRVLEHWHS). Phe793 contacts substrate. The Mo-bis(molybdopterin guanine dinucleotide) site is built by Asn801 and Lys818.

It belongs to the prokaryotic molybdopterin-containing oxidoreductase family. NasA/NapA/NarB subfamily. As to quaternary structure, component of the periplasmic nitrate reductase NapAB complex composed of NapA and NapB. It depends on [4Fe-4S] cluster as a cofactor. Mo-bis(molybdopterin guanine dinucleotide) serves as cofactor. In terms of processing, predicted to be exported by the Tat system. The position of the signal peptide cleavage has not been experimentally proven.

The protein localises to the periplasm. It catalyses the reaction 2 Fe(II)-[cytochrome] + nitrate + 2 H(+) = 2 Fe(III)-[cytochrome] + nitrite + H2O. Its function is as follows. Catalytic subunit of the periplasmic nitrate reductase complex NapAB. Receives electrons from NapB and catalyzes the reduction of nitrate to nitrite. This is Periplasmic nitrate reductase from Paramagnetospirillum magnetotacticum (Aquaspirillum magnetotacticum).